The chain runs to 161 residues: Regulator of ribonuclease activity A (161 aa).

Belongs to the RraA family. As to quaternary structure, homotrimer. Binds to both RNA-binding sites in the C-terminal region of Rne and to RhlB.

The protein localises to the cytoplasm. In terms of biological role, globally modulates RNA abundance by binding to RNase E (Rne) and regulating its endonucleolytic activity. Can modulate Rne action in a substrate-dependent manner by altering the composition of the degradosome. Modulates RNA-binding and helicase activities of the degradosome. The chain is Regulator of ribonuclease activity A from Erwinia tasmaniensis (strain DSM 17950 / CFBP 7177 / CIP 109463 / NCPPB 4357 / Et1/99).